The primary structure comprises 695 residues: Elongation factor G (695 aa).

Residues 8–282 (KDTRNIGIMA…AIVDYMPAPI (275 aa)) form the tr-type G domain. GTP is bound by residues 17–24 (AHIDAGKT), 81–85 (DTPGH), and 135–138 (NKMD). Residues 285–304 (PDIKGVDPQTDEPTTRKSSD) form a disordered region.

The protein belongs to the TRAFAC class translation factor GTPase superfamily. Classic translation factor GTPase family. EF-G/EF-2 subfamily.

Its subcellular location is the cytoplasm. Its function is as follows. Catalyzes the GTP-dependent ribosomal translocation step during translation elongation. During this step, the ribosome changes from the pre-translocational (PRE) to the post-translocational (POST) state as the newly formed A-site-bound peptidyl-tRNA and P-site-bound deacylated tRNA move to the P and E sites, respectively. Catalyzes the coordinated movement of the two tRNA molecules, the mRNA and conformational changes in the ribosome. This chain is Elongation factor G, found in Finegoldia magna (strain ATCC 29328 / DSM 20472 / WAL 2508) (Peptostreptococcus magnus).